A 701-amino-acid polypeptide reads, in one-letter code: Coiled-coil domain-containing protein 62 (701 aa).

2 coiled-coil regions span residues 61 to 197 (ETST…LQAR) and 241 to 342 (TCVV…QFLN). Residues 624-652 (KSAEREEESAALPDRRTSANEKDDFSPTS) form a disordered region. Residues 636-648 (PDRRTSANEKDDF) show a composition bias toward basic and acidic residues. 2 short sequence motifs (LXXLL motif) span residues 654 to 658 (LQRLL) and 670 to 674 (LSTLL).

In terms of assembly, interacts with ESR1 and ESR2 in the presence of estradiol/E2. The interaction with ESR2 recruits CCDC62 to ER target genes, including cyclin-D1/CCND1 AP-1 promoter. Interacts with GOPC. Highly expressed in testis, not detected in other tissues (at protein level). Expressed at low levels in the epididymis, lung, spleen, bladder, kidney, liver, muscle.

It is found in the cytoplasm. Its subcellular location is the nucleus. The protein localises to the cytoplasmic vesicle. It localises to the secretory vesicle. The protein resides in the acrosome. Its function is as follows. Nuclear receptor coactivator that can enhance preferentially estrogen receptors ESR1 and ESR2 transactivation. Also modulates progesterone/PGR, glucocorticoid/NR3C1 and androgen/AR receptors transactivation, although at lower level; little effect on vitamin D receptor/VDR. Required for normal spermiogenesis. It probably plays a role in acrosome formation. This chain is Coiled-coil domain-containing protein 62 (Ccdc62), found in Mus musculus (Mouse).